Here is a 63-residue protein sequence, read N- to C-terminus: MAVPKKRTSMSKKRIRKNIWKKKTYFSIVQSYSLVKSRSFSSGNEHPKPKGFSGQQTNNKIFE.

Residues 39 to 63 (SFSSGNEHPKPKGFSGQQTNNKIFE) are disordered. The span at 53–63 (SGQQTNNKIFE) shows a compositional bias: polar residues.

Belongs to the bacterial ribosomal protein bL32 family.

The protein localises to the plastid. The protein resides in the chloroplast. This chain is Large ribosomal subunit protein bL32c, found in Triticum aestivum (Wheat).